Consider the following 428-residue polypeptide: MLRSLPASLALVAAFASKASAHAAFWDKSMYGFNVTAQTFPYDNRPQVPLYNMTFDQWWFHGHKDYPPNEGDFFELPAGGEVNSIISCDKGATPFYESSPGGDSGYGSNSPCPGQPMSEYHTTGIDDVKGCCMAIAYKPDVNDVQPDDFVVFSCNSTCVWEMNTKFEIPKLPACPEGGCHCAWFWIHSYDSGAEQIYMNGFKCKVTGDVGTQPLGKPAVPRRCGADPDHGKPDPTPGNCTIGAKTPMYWYQREGNNMFEDTYDAPYYNPLYGFNDGAQNDIFMDGVIASLASSGTGSSPTSTVDSSSSAAAASTSYPAQPTSSTQDAPGSSAYPSSSSDSVNSPTTQPYPASSASSTSEAQTTPAAVPTSVATEASSSPIASTTVDEAVVSSSTVGSINPTRSCKPRPSGVAAQKKKRKHARHLHNAH.

An N-terminal signal peptide occupies residues 1-21 (MLRSLPASLALVAAFASKASA). Residues asparagine 34 and asparagine 52 are each glycosylated (N-linked (GlcNAc...) asparagine). Disulfide bonds link cysteine 88/cysteine 112, cysteine 131/cysteine 158, cysteine 174/cysteine 179, cysteine 181/cysteine 203, and cysteine 223/cysteine 239. N-linked (GlcNAc...) asparagine glycosylation is present at asparagine 155. Disordered regions lie at residues 216-239 (KPAV…PGNC) and 292-428 (SSGT…HNAH). Residues 223 to 232 (CGADPDHGKP) are compositionally biased toward basic and acidic residues. The N-linked (GlcNAc...) asparagine glycan is linked to asparagine 238. Over residues 292 to 379 (SSGTGSSPTS…SVATEASSSP (88 aa)) the composition is skewed to low complexity. Positions 380-402 (IASTTVDEAVVSSSTVGSINPTR) are enriched in polar residues. Residues 414-428 (QKKKRKHARHLHNAH) are compositionally biased toward basic residues.

The cofactor is Cu(2+).

Its subcellular location is the secreted. Its function is as follows. Lytic polysaccharide monooxygenase (LPMO) showing oxidase and peroxidase activities that are common for LPMOs. Catalysis by LPMOs requires the reduction of the active-site copper from Cu(II) to Cu(I) by a reducing agent and H(2)O(2) or O(2) as a cosubstrate. Shows no activity on cellulose-associated xylan or any other tested polysaccharide substrate, meaning that the substrate rremains unknown. In Trametes coccinea (strain BRFM310) (Pycnoporus coccineus), this protein is AA14 family lytic polysaccharide monooxygenase A.